We begin with the raw amino-acid sequence, 1281 residues long: Dynactin subunit 1 (1281 aa).

Residues 1–26 (MAQSRRHMSSRTPSGSRMSTEASARP) are disordered. Over residues 10–22 (SRTPSGSRMSTEA) the composition is skewed to polar residues. Residues 48–90 (GATLFATGKWVGVILDEAKGKNDGTVQGRKYFTCDEGHGIFVR) enclose the CAP-Gly domain. Positions 100–221 (GADTTSPETP…SPSKEEEGLR (122 aa)) are disordered. A compositionally biased stretch (polar residues) spans 102–114 (DTTSPETPDSSAS). 4 positions are modified to phosphothreonine: T108, T145, T146, and T147. Residues 129–152 (SKLRGLKPKKAPTARKTTTRRPKP) are compositionally biased toward basic residues. The segment covering 161–205 (AGPSSSLGPSGSASAGELSSSEPSTPAQTPLAAPIIPTPALTSPG) has biased composition (low complexity). The residue at position 179 (S179) is a Phosphoserine; by PLK1. S212 carries the post-translational modification Phosphoserine; by CDK1. Coiled-coil stretches lie at residues 214 to 547 (SKEE…RQQQ), 943 to 1049 (LKLE…EGLR), and 1185 to 1214 (SAQL…KETV). Residues 911–1281 (EYDAERPPSK…LHQLHSRLIS (371 aa)) are interaction with HPS6.

The protein belongs to the dynactin 150 kDa subunit family. As to quaternary structure, monomer and homodimer. Subunit of dynactin, a multiprotein complex part of a tripartite complex with dynein and a adapter, such as BICDL1, BICD2 or HOOK3. The dynactin complex is built around ACTR1A/ACTB filament and consists of an actin-related filament composed of a shoulder domain, a pointed end and a barbed end. Its length is defined by its flexible shoulder domain. The soulder is composed of 2 DCTN1 subunits, 4 DCTN2 and 2 DCTN3. DCTN1/p150(glued) binds directly to microtubules and to cytoplasmic dynein. The 4 DCNT2 (via N-terminus) bind the ACTR1A filament and act as molecular rulers to determine the length. The pointed end is important for binding dynein-dynactin cargo adapters. Consists of 4 subunits: ACTR10, DCNT4, DCTN5 and DCTN6. The barbed end is composed of a CAPZA1:CAPZB heterodimers, which binds ACTR1A/ACTB filament and dynactin and stabilizes dynactin. Interacts with the C-terminus of MAPRE1, MAPRE2 and MAPRE3. Interacts with FBXL5. Interacts with ECPAS. Interacts with CLIP1. Interacts with CLN3 and DYNAP. Interacts with MISP; this interaction regulates its distribution at the cell cortex. Interacts with CEP131. Interacts with CEP126. Interacts with dynein intermediate chain and dynein heavy chain. Interacts with PLK1 (via POLO-box domain). Interacts with TBCB and PARD6A. Binds preferentially to tyrosinated microtubules than to detyrosinated microtubules. Interacts with KIF3A. Interacts with HPS6. Interacts with SNX6. Interacts with BICD2. Interacts with DST (isoform 1). Identified in a complex with MREG and RILP. Interacts with BCCIP. Interacts with DCDC1. Interacts with AKNA. Interacts with DYNC1I2. Interacts with RUFY3 and RUFY4. Post-translationally, ubiquitinated by a SCF complex containing FBXL5, leading to its degradation by the proteasome. In terms of processing, phosphorylation by SLK at Thr-145, Thr-146 and Thr-147 targets DCTN1 to the centrosome. It is uncertain if SLK phosphorylates all three threonines or one or two of them. PLK1-mediated phosphorylation at Ser-179 is essential for its localization in the nuclear envelope and promotes its dissociation from microtubules during early mitosis and positively regulates nuclear envelope breakdown during prophase.

Its subcellular location is the cytoplasm. The protein resides in the cytoskeleton. It localises to the microtubule organizing center. It is found in the centrosome. The protein localises to the centriole. Its subcellular location is the spindle. The protein resides in the nucleus envelope. It localises to the cell cortex. Its function is as follows. Part of the dynactin complex that activates the molecular motor dynein for ultra-processive transport along microtubules. Plays a key role in dynein-mediated retrograde transport of vesicles and organelles along microtubules by recruiting and tethering dynein to microtubules. Binds to both dynein and microtubules providing a link between specific cargos, microtubules and dynein. Essential for targeting dynein to microtubule plus ends, recruiting dynein to membranous cargos and enhancing dynein processivity (the ability to move along a microtubule for a long distance without falling off the track). Can also act as a brake to slow the dynein motor during motility along the microtubule. Can regulate microtubule stability by promoting microtubule formation, nucleation and polymerization and by inhibiting microtubule catastrophe in neurons. Inhibits microtubule catastrophe by binding both to microtubules and to tubulin, leading to enhanced microtubule stability along the axon. Plays a role in metaphase spindle orientation. Plays a role in centriole cohesion and subdistal appendage organization and function. Its recruitment to the centriole in a KIF3A-dependent manner is essential for the maintenance of centriole cohesion and the formation of subdistal appendage. Also required for microtubule anchoring at the mother centriole. Plays a role in primary cilia formation. The sequence is that of Dynactin subunit 1 (Dctn1) from Mus musculus (Mouse).